Reading from the N-terminus, the 323-residue chain is GTP 3',8-cyclase (323 aa).

The region spanning 4–233 is the Radical SAM core domain; it reads KYGREIDYLR…NGPAKYISIE (230 aa). Residue Arg-13 coordinates GTP. [4Fe-4S] cluster is bound by residues Cys-20 and Cys-24. S-adenosyl-L-methionine is bound at residue Tyr-26. Cys-27 contacts [4Fe-4S] cluster. Arg-63 is a binding site for GTP. Gly-67 contributes to the S-adenosyl-L-methionine binding site. Residue Thr-94 participates in GTP binding. Ser-118 contributes to the S-adenosyl-L-methionine binding site. A GTP-binding site is contributed by Lys-154. Residue Met-188 participates in S-adenosyl-L-methionine binding. Residues Cys-250 and Cys-253 each coordinate [4Fe-4S] cluster. 255–257 contributes to the GTP binding site; the sequence is RIR. Residue Cys-267 coordinates [4Fe-4S] cluster.

Belongs to the radical SAM superfamily. MoaA family. As to quaternary structure, monomer and homodimer. Requires [4Fe-4S] cluster as cofactor.

It carries out the reaction GTP + AH2 + S-adenosyl-L-methionine = (8S)-3',8-cyclo-7,8-dihydroguanosine 5'-triphosphate + 5'-deoxyadenosine + L-methionine + A + H(+). Its pathway is cofactor biosynthesis; molybdopterin biosynthesis. Its function is as follows. Catalyzes the cyclization of GTP to (8S)-3',8-cyclo-7,8-dihydroguanosine 5'-triphosphate. This chain is GTP 3',8-cyclase, found in Clostridium perfringens (strain SM101 / Type A).